Reading from the N-terminus, the 474-residue chain is ATP synthase subunit beta, chloroplastic (474 aa).

155 to 162 contributes to the ATP binding site; that stretch reads GGAGVGKT.

The protein belongs to the ATPase alpha/beta chains family. In terms of assembly, F-type ATPases have 2 components, CF(1) - the catalytic core - and CF(0) - the membrane proton channel. CF(1) has five subunits: alpha(3), beta(3), gamma(1), delta(1), epsilon(1). CF(0) has four main subunits: a(1), b(1), b'(1) and c(9-12).

Its subcellular location is the plastid. It localises to the chloroplast thylakoid membrane. It catalyses the reaction ATP + H2O + 4 H(+)(in) = ADP + phosphate + 5 H(+)(out). Its function is as follows. Produces ATP from ADP in the presence of a proton gradient across the membrane. The catalytic sites are hosted primarily by the beta subunits. The chain is ATP synthase subunit beta, chloroplastic from Thalassiosira pseudonana (Marine diatom).